The chain runs to 501 residues: Cytochrome P450 monooxygenase 76AD131 (501 aa).

A helical transmembrane segment spans residues 1-21; the sequence is MGYYAIFAVVLPFLWTCFYLL. Asn-115 and Asn-264 each carry an N-linked (GlcNAc...) asparagine glycan. Cys-444 is a heme binding site.

This sequence belongs to the cytochrome P450 family. Heme serves as cofactor. In terms of tissue distribution, highly expressed in aerial parts, in both skin and flesh tissues.

It is found in the membrane. The enzyme catalyses tyramine + reduced [NADPH--hemoprotein reductase] + O2 = dopamine + oxidized [NADPH--hemoprotein reductase] + H2O + H(+). It catalyses the reaction 3-methoxytyramine + reduced [NADPH--hemoprotein reductase] + O2 = 3,4-dihydroxy-5-methoxyphenethylamine + oxidized [NADPH--hemoprotein reductase] + H2O + H(+). It functions in the pathway aromatic compound metabolism. It participates in alkaloid biosynthesis. Functionally, cytochrome P450 monooxygenase participating in the biosynthesis of natural products derived from phenylethylamine, including mescaline, a natural hallucinogen potentially used in psychotherapeutic treatments. Catalyzes the hydroxylation of tyramine to dopamine and of 3-methoxytyramine to 3,4-dihydroxy-5-methoxyphenethylamine. This is Cytochrome P450 monooxygenase 76AD131 from Lophophora williamsii (Peyote).